The primary structure comprises 213 residues: Orotate phosphoribosyltransferase (213 aa).

Residue Lys26 participates in 5-phospho-alpha-D-ribose 1-diphosphate binding. Position 34-35 (34-35) interacts with orotate; it reads FF. Residues 72–73, Arg99, Lys100, Lys103, His105, and 124–132 contribute to the 5-phospho-alpha-D-ribose 1-diphosphate site; these read YK and DDVITAGTS. Orotate-binding residues include Thr128 and Arg156.

It belongs to the purine/pyrimidine phosphoribosyltransferase family. PyrE subfamily. As to quaternary structure, homodimer. The cofactor is Mg(2+).

The catalysed reaction is orotidine 5'-phosphate + diphosphate = orotate + 5-phospho-alpha-D-ribose 1-diphosphate. It participates in pyrimidine metabolism; UMP biosynthesis via de novo pathway; UMP from orotate: step 1/2. In terms of biological role, catalyzes the transfer of a ribosyl phosphate group from 5-phosphoribose 1-diphosphate to orotate, leading to the formation of orotidine monophosphate (OMP). This Methylococcus capsulatus (strain ATCC 33009 / NCIMB 11132 / Bath) protein is Orotate phosphoribosyltransferase.